The primary structure comprises 477 residues: Ribulose bisphosphate carboxylase large chain (477 aa).

A propeptide spanning residues 1-2 (MS) is cleaved from the precursor. N-acetylproline is present on Pro-3. Lys-14 carries the post-translational modification N6,N6,N6-trimethyllysine. The substrate site is built by Asn-123 and Thr-173. Residue Lys-175 is the Proton acceptor of the active site. Lys-177 serves as a coordination point for substrate. Mg(2+)-binding residues include Lys-201, Asp-203, and Glu-204. Lys-201 is modified (N6-carboxylysine). The active-site Proton acceptor is the His-294. Substrate is bound by residues Arg-295, His-327, and Ser-379.

The protein belongs to the RuBisCO large chain family. Type I subfamily. As to quaternary structure, heterohexadecamer of 8 large chains and 8 small chains; disulfide-linked. The disulfide link is formed within the large subunit homodimers. It depends on Mg(2+) as a cofactor. Post-translationally, the disulfide bond which can form in the large chain dimeric partners within the hexadecamer appears to be associated with oxidative stress and protein turnover.

Its subcellular location is the plastid. The protein resides in the chloroplast. It carries out the reaction 2 (2R)-3-phosphoglycerate + 2 H(+) = D-ribulose 1,5-bisphosphate + CO2 + H2O. The enzyme catalyses D-ribulose 1,5-bisphosphate + O2 = 2-phosphoglycolate + (2R)-3-phosphoglycerate + 2 H(+). In terms of biological role, ruBisCO catalyzes two reactions: the carboxylation of D-ribulose 1,5-bisphosphate, the primary event in carbon dioxide fixation, as well as the oxidative fragmentation of the pentose substrate in the photorespiration process. Both reactions occur simultaneously and in competition at the same active site. The protein is Ribulose bisphosphate carboxylase large chain of Nicotiana acuminata (Acuminate tobacco).